The following is a 165-amino-acid chain: Cysteine-rich hydrophobic domain-containing protein 2 (165 aa).

A coiled-coil region spans residues 1-26; that stretch reads MADFDEIYEEEEDEERALEEQLLKYS. The CHIC motif (Cys-rich) signature appears at 88–106; that stretch reads CGCLCCCCTLGCSMWPVIC.

Belongs to the CHIC family. Post-translationally, palmitoylation in the CHIC motif is required for membrane association.

The protein resides in the cell membrane. The protein localises to the cytoplasmic vesicle. The chain is Cysteine-rich hydrophobic domain-containing protein 2 (CHIC2) from Homo sapiens (Human).